Consider the following 3661-residue polypeptide: Serine/threonine-protein kinase SMG1 (3661 aa).

Over residues 1–11 (MSRRAPGSRLS) the composition is skewed to low complexity. Disordered stretches follow at residues 1–101 (MSRR…TYGR) and 116–144 (PEFTSVQHGSRALATKDMRKSQERSMSYS). Residues 1-1977 (MSRRAPGSRL…GVLLQQHMYV (1977 aa)) form an interaction with SMG8 and SMG9 region. Polar residues predominate over residues 26 to 35 (NDWQPRTDSA). Composition is skewed to basic and acidic residues over residues 69 to 86 (QRHDDTRVHADIQNDEKG) and 129 to 138 (ATKDMRKSQE). Position 173 is an N6-acetyllysine (Lys173). Polar residues predominate over residues 1154–1165 (RNSASPKHSLNG). Residues 1154-1175 (RNSASPKHSLNGESRKTVLSKP) form a disordered region. In terms of domain architecture, FAT spans 1283 to 1866 (RELQKSIEVQ…LYPAIVGTIS (584 aa)). An HEAT repeat occupies 1817–1852 (APWRGIIPQLFSRLNHPEVYVRQSICNLLCRVAQDS). The tract at residues 1898-1919 (ECEGGSPPASQDSNKDEPKSGL) is disordered. In terms of domain architecture, PI3K/PI4K catalytic spans 2124-2463 (VGGTITILPT…MEREITRSLF (340 aa)). Positions 2130–2136 (ILPTKTK) are G-loop. Residues 2332-2340 (GLGDRHLDN) form a catalytic loop region. The segment at 2352 to 2376 (HIDYNVCFEKGKSLRVPEKVPFRMT) is activation loop. Thr3550 carries the post-translational modification Phosphothreonine. Phosphoserine is present on residues Ser3556 and Ser3570. Residues 3568 to 3579 (ATSADTPPSTVP) show a composition bias toward polar residues. The segment at 3568-3591 (ATSADTPPSTVPGTGKSVACSPKK) is disordered. Phosphothreonine occurs at positions 3573 and 3577. The FATC domain maps to 3629 to 3661 (RRMSVAEQVDYVIKEATNLDNLAQLYEGWTAWV).

It belongs to the PI3/PI4-kinase family. Component of the SMG1C complex composed of SMG1, SMG8 and SMG9; the recruitment of SMG8 to SMG1 N-terminus induces a large conformational change in the SMG1 C-terminal head domain containing the catalytic domain. Component of the transient SURF (SMG1-UPF1-eRF1-eRF3) complex. Part of a complex composed of SMG1, DHX34 and UPF1; within the complex DHX34 acts as a scaffolding protein to facilitate SMG1 phosphorylation of UPF1. Interacts with PRKCI. Interacts with TELO2 and TTI1. Interacts with RUVBL1 and RUVBL2. Interacts with UPF2. Interacts with DHX34 (via C-terminus); the interaction is RNA-independent. Requires Mn(2+) as cofactor. In terms of processing, autophosphorylated. In terms of tissue distribution, widely expressed, with highest level in heart and skeletal muscle. Expressed in placenta, brain, lung and spleen, but not in liver.

It is found in the nucleus. Its subcellular location is the cytoplasm. The enzyme catalyses L-seryl-[protein] + ATP = O-phospho-L-seryl-[protein] + ADP + H(+). It carries out the reaction L-threonyl-[protein] + ATP = O-phospho-L-threonyl-[protein] + ADP + H(+). Inhibited by caffeine, LY294002 and wortmannin. Its function is as follows. Serine/threonine protein kinase involved in both mRNA surveillance and genotoxic stress response pathways. Recognizes the substrate consensus sequence [ST]-Q. Plays a central role in nonsense-mediated decay (NMD) of mRNAs containing premature stop codons by phosphorylating UPF1/RENT1. Recruited by release factors to stalled ribosomes together with SMG8 and SMG9 (forming the SMG1C protein kinase complex), and UPF1 to form the transient SURF (SMG1-UPF1-eRF1-eRF3) complex. In EJC-dependent NMD, the SURF complex associates with the exon junction complex (EJC) through UPF2 and allows the formation of an UPF1-UPF2-UPF3 surveillance complex which is believed to activate NMD. Also acts as a genotoxic stress-activated protein kinase that displays some functional overlap with ATM. Can phosphorylate p53/TP53 and is required for optimal p53/TP53 activation after cellular exposure to genotoxic stress. Its depletion leads to spontaneous DNA damage and increased sensitivity to ionizing radiation (IR). May activate PRKCI but not PRKCZ. This Homo sapiens (Human) protein is Serine/threonine-protein kinase SMG1.